We begin with the raw amino-acid sequence, 691 residues long: Gex-3-interacting protein 13 (691 aa).

2 disordered regions span residues 18-97 (TASL…SAHL) and 171-195 (PASP…KRQR). Residues 31 to 46 (SSFTTTSESTSPPYSS) are compositionally biased toward low complexity. Positions 47–57 (SEHHSPTDQRT) are enriched in basic and acidic residues. Positions 58 to 79 (ETPTSDSGNASFSPENVATSFE) are enriched in polar residues. The span at 171–183 (PASPCTTAASAPS) shows a compositional bias: low complexity. 2 BED-type zinc fingers span residues 194–242 (QRRN…YEKV) and 424–473 (LRRH…YEKV). Residues Cys212, Cys215, His230, His235, Cys443, Cys446, His461, and His466 each coordinate Zn(2+).

Interacts with gex-3.

This is Gex-3-interacting protein 13 (gei-13) from Caenorhabditis elegans.